A 188-amino-acid polypeptide reads, in one-letter code: PRA1 family protein 3 (188 aa).

Residue Met1 is modified to N-acetylmethionine. At 1–35 (MEVQVAPLRSWEDFFPGSDRFGRPDFKDISKWNNR) the chain is on the cytoplasmic side. A run of 2 helical transmembrane segments spans residues 36–56 (VVNN…AVVA) and 57–77 (IVGF…ILVF). Over 78-93 (LGFVWVSHNKDILRRM) the chain is Cytoplasmic. 2 consecutive transmembrane segments (helical) span residues 94–114 (KKQY…FLIS) and 115–135 (YLGD…LMFI). The Cytoplasmic segment spans residues 136-188 (HASLRLRNIKNKLENKKEEIGLKKTPMGIILDALEQQEDNINKLASYIPKVKE). The tract at residues 136 to 188 (HASLRLRNIKNKLENKKEEIGLKKTPMGIILDALEQQEDNINKLASYIPKVKE) is targeting to endoplasmic reticulum membrane.

This sequence belongs to the PRA1 family. Binds to prenylated RAB and Ras superfamily members.

The protein resides in the endoplasmic reticulum membrane. The protein localises to the cell membrane. Its subcellular location is the cytoplasm. It localises to the cytoskeleton. Functionally, regulates intracellular concentrations of taurine and glutamate. Negatively modulates SLC1A1/EAAC1 glutamate transport activity by decreasing its affinity for glutamate in a PKC activity-dependent manner. May be involved in membrane traffic. The protein is PRA1 family protein 3 (ARL6IP5) of Gallus gallus (Chicken).